Consider the following 182-residue polypeptide: Ribosome-recycling factor (182 aa).

It belongs to the RRF family.

The protein resides in the cytoplasm. In terms of biological role, responsible for the release of ribosomes from messenger RNA at the termination of protein biosynthesis. May increase the efficiency of translation by recycling ribosomes from one round of translation to another. The chain is Ribosome-recycling factor from Nostoc sp. (strain PCC 7120 / SAG 25.82 / UTEX 2576).